We begin with the raw amino-acid sequence, 603 residues long: MQTQHTKVTQTHFLLWILLLCMPFGKSHTEEDFIITTKTGRVRGLSMPVLGGTVTAFLGIPYAQPPLGSLRFKKPQPLNKWPDIHNATQYANSCYQNIDQAFPGFQGSEMWNPNTNLSEDCLYLNVWIPVPKPKNATVMVWIYGGGFQTGTSSLPVYDGKFLARVERVIVVSMNYRVGALGFLAFPGNPDAPGNMGLFDQQLALQWVQRNIAAFGGNPKSITIFGESAGAASVSLHLLCPQSYPLFTRAILESGSSNAPWAVKHPEEARNRTLTLAKFTGCSKENEMEMIKCLRSKDPQEILRNERFVLPSDSILSINFGPTVDGDFLTDMPHTLLQLGKVKKAQILVGVNKDEGTAFLVYGAPGFSKDNDSLITRKEFQEGLNMYFPGVSRLGKEAVLFYYVDWLGEQSPEVYRDALDDVIGDYNIICPALEFTKKFAELENNAFFYFFEHRSSKLPWPEWMGVMHGYEIEFVFGLPLGRRVNYTRAEEIFSRSIMKTWANFAKYGHPNGTQGNSTMWPVFTSTEQKYLTLNTEKSKIYSKLRAPQCQFWRLFFPKVLEMTGDIDETEQEWKAGFHRWSNYMMDWQNQFNDYTSKKESCTAL.

The first 29 residues, 1-29 (MQTQHTKVTQTHFLLWILLLCMPFGKSHT), serve as a signal peptide directing secretion. A glycan (N-linked (GlcNAc...) asparagine) is linked at asparagine 86. Cysteine 94 and cysteine 121 form a disulfide bridge. The N-linked (GlcNAc...) asparagine glycan is linked to asparagine 135. Position 145–146 (145–146 (GG)) interacts with substrate. Serine 227 (acyl-ester intermediate) is an active-site residue. A Phosphoserine modification is found at serine 227. Residue asparagine 270 is glycosylated (N-linked (GlcNAc...) asparagine). Residues cysteine 281 and cysteine 292 are joined by a disulfide bond. Catalysis depends on glutamate 354, which acts as the Charge relay system. An N-linked (GlcNAc...) asparagine glycan is attached at asparagine 370. A disulfide bridge links cysteine 429 with cysteine 548. The active-site Charge relay system is histidine 467. 3 N-linked (GlcNAc...) asparagine glycosylation sites follow: asparagine 484, asparagine 510, and asparagine 515.

Belongs to the type-B carboxylesterase/lipase family. As to quaternary structure, homotetramer; disulfide-linked. Dimer of dimers. Present in most cells except erythrocytes.

It localises to the secreted. The enzyme catalyses an acylcholine + H2O = a carboxylate + choline + H(+). In terms of biological role, esterase with broad substrate specificity. Contributes to the inactivation of the neurotransmitter acetylcholine. Can degrade neurotoxic organophosphate esters. The polypeptide is Cholinesterase (Bche) (Mus musculus (Mouse)).